Reading from the N-terminus, the 197-residue chain is MLERIKDSFTESIQTKIDAAEALPESIAKAAEMMVHCLLGGNKILACGNGGSAGDAQHFSAELLNRYEIERPPLPAIALSTDTSTITAIANDYSYDEIFSKQILALGQPGDILLAISTSGNSGNVIKAMEAALSRDMTIVALTGKDGGAMAGLLSVGDVEIRVPSNVTARIQEVHLLVIHCLCDNIDRTLFPQDEQQ.

In terms of domain architecture, SIS spans 34–196; that stretch reads MVHCLLGGNK…DRTLFPQDEQ (163 aa). A substrate-binding site is contributed by 49-51; that stretch reads NGG. 2 residues coordinate Zn(2+): H58 and E62. Residues E62, 91–92, 117–119, S122, and Q172 each bind substrate; these read ND and STS. Zn(2+) is bound by residues Q172 and H180.

It belongs to the SIS family. GmhA subfamily. Homotetramer. Zn(2+) is required as a cofactor.

It localises to the cytoplasm. It carries out the reaction 2 D-sedoheptulose 7-phosphate = D-glycero-alpha-D-manno-heptose 7-phosphate + D-glycero-beta-D-manno-heptose 7-phosphate. It functions in the pathway carbohydrate biosynthesis; D-glycero-D-manno-heptose 7-phosphate biosynthesis; D-glycero-alpha-D-manno-heptose 7-phosphate and D-glycero-beta-D-manno-heptose 7-phosphate from sedoheptulose 7-phosphate: step 1/1. In terms of biological role, catalyzes the isomerization of sedoheptulose 7-phosphate in D-glycero-D-manno-heptose 7-phosphate. This Shewanella sp. (strain W3-18-1) protein is Phosphoheptose isomerase.